The chain runs to 347 residues: Fe(2+) transport protein 1 (347 aa).

An N-terminal signal peptide occupies residues 1 to 22; sequence MASNSALLMKTIFLVLIFVSFA. The Extracellular portion of the chain corresponds to 23-52; sequence ISPATSTAPEECGSESANPCVNKAKALPLK. The helical transmembrane segment at 53–73 threads the bilayer; the sequence is VIAIFVILIASMIGVGAPLFS. Topologically, residues 74 to 84 are cytoplasmic; that stretch reads RNVSFLQPDGN. Residues 85 to 105 traverse the membrane as a helical segment; sequence IFTIIKCFASGIILGTGFMHV. Residues 106-125 are Extracellular-facing; sequence LPDSFEMLSSICLEENPWHK. A helical membrane pass occupies residues 126–146; the sequence is FPFSGFLAMLSGLITLAIDSM. Residues 147–192 are Cytoplasmic-facing; sequence ATSLYTSKNAVGIMPHGHGHGHGPANDVTLPIKEDDSSNAQLLRYR. Glycyl lysine isopeptide (Lys-Gly) (interchain with G-Cter in ubiquitin) cross-links involve residues K154 and K179. A helical transmembrane segment spans residues 193-213; sequence VIAMVLELGIIVHSVVIGLSL. At 214–224 the chain is on the extracellular side; the sequence is GATSDTCTIKG. Residues 225-245 form a helical membrane-spanning segment; that stretch reads LIAALCFHQMFEGMGLGGCIL. Topologically, residues 246 to 254 are cytoplasmic; that stretch reads QAEYTNMKK. Residues 255 to 275 traverse the membrane as a helical segment; it reads FVMAFFFAVTTPFGIALGIAL. Over 276–286 the chain is Extracellular; the sequence is STVYQDNSPKA. Residues 287–307 traverse the membrane as a helical segment; the sequence is LITVGLLNACSAGLLIYMALV. Over 308 to 326 the chain is Cytoplasmic; that stretch reads DLLAAEFMGPKLQGSIKMQ. The helical transmembrane segment at 327-347 threads the bilayer; sequence FKCLIAALLGCGGMSIIAKWA.

Belongs to the ZIP transporter (TC 2.A.5) family. As to quaternary structure, interacts with FREE1. Monoubiquitinated on several Lys residues. Monoubiquitination controls trafficking from the plasma membrane and targeting to the vacuole. Expressed in the external cell layers of the root including the lateral branching zone. Also detected in flowers before pollination.

It localises to the cell membrane. The protein resides in the early endosome. The protein localises to the golgi apparatus. Its subcellular location is the trans-Golgi network. It is found in the vacuole. Its function is as follows. High-affinity iron transporter that plays a key role in the uptake of iron from the rhizosphere across the plasma membrane in the root epidermal layer. Acts as the principal regulator of iron homeostasis in planta. Also mediates the heavy metals uptake under iron-deficiency by its ability to transport cobalt, cadmium, manganese and/or zinc ions. The polypeptide is Fe(2+) transport protein 1 (IRT1) (Arabidopsis thaliana (Mouse-ear cress)).